An 86-amino-acid polypeptide reads, in one-letter code: MKFYIVFALILACAACVSSQEGTNFYCGRQLSRTLALVCWGAEKRDAGWWVPPQSARALGGGRGKRGPVDECCLKPCSIEEMLTYC.

The signal sequence occupies residues 1 to 19 (MKFYIVFALILACAACVSS). Positions 20–43 (QEGTNFYCGRQLSRTLALVCWGAE) are excised as a propeptide. Arg-63 carries the arginine amide modification. Residues 67-86 (GPVDECCLKPCSIEEMLTYC) constitute a propeptide that is removed on maturation.

The protein belongs to the insulin family. DAGWWVPPQSARALGGGR-amide: Expressed in corpora cardiaca (CC), corpora allata (CA), antennal lobe (AL) and gnathal ganglion (GNG) (at protein level). Expression in CC and CA detected in most animals, in AL in some animals and in GNG in few animals (at protein level).

The protein resides in the secreted. This chain is Insulin-related peptide 2, found in Agrotis ipsilon (Black cutworm moth).